The primary structure comprises 661 residues: Peroxisomal acyl-coenzyme A oxidase 1 (661 aa).

At Ser26 the chain carries Phosphoserine. N6-acetyllysine is present on Lys65. Lys89 bears the N6-succinyllysine mark. An FAD-binding site is contributed by Thr139. The residue at position 159 (Lys159) is an N6-succinyllysine. FAD is bound at residue Gly178. Lys216 carries the post-translational modification N6-acetyllysine. An N6-succinyllysine modification is found at Lys241. Lys255, Lys267, and Lys272 each carry N6-acetyllysine. N6-succinyllysine is present on Lys349. The active-site Proton acceptor is the Glu421. Residues Lys437 and Lys446 each carry the N6-acetyllysine; alternate modification. An N6-succinyllysine; alternate mark is found at Lys437 and Lys446. An N6-acetyllysine modification is found at Lys500. Residue Lys512 is modified to N6-acetyllysine; alternate. Lys512 carries the N6-succinyllysine; alternate modification. Residue Lys542 is modified to N6-succinyllysine. Lys637 is subject to N6-acetyllysine; alternate. Lys637 carries the post-translational modification N6-succinyllysine; alternate. Position 643 is an N6-succinyllysine (Lys643). At Ser649 the chain carries Phosphoserine. An N6-acetyllysine modification is found at Lys652. N6-succinyllysine is present on Lys655. The short motif at 659–661 (SKL) is the Microbody targeting signal element.

Belongs to the acyl-CoA oxidase family. In terms of assembly, homodimer. Interacts with LONP2. The cofactor is FAD.

It is found in the peroxisome. It catalyses the reaction a 2,3-saturated acyl-CoA + O2 = a (2E)-enoyl-CoA + H2O2. The enzyme catalyses hexadecanoyl-CoA + O2 = (2E)-hexadecenoyl-CoA + H2O2. It carries out the reaction dodecanoyl-CoA + O2 = (2E)-dodecenoyl-CoA + H2O2. The catalysed reaction is octanoyl-CoA + O2 = (2E)-octenoyl-CoA + H2O2. It catalyses the reaction decanoyl-CoA + O2 = (2E)-decenoyl-CoA + H2O2. The enzyme catalyses tetradecanoyl-CoA + O2 = (2E)-tetradecenoyl-CoA + H2O2. It carries out the reaction hexadecanedioyl-CoA + O2 = (2E)-hexadecenedioyl-CoA + H2O2. The catalysed reaction is tetracosanoyl-CoA + O2 = (2E)-tetracosenoyl-CoA + H2O2. It catalyses the reaction glutaryl-CoA + O2 = (2E)-glutaconyl-CoA + H2O2. The enzyme catalyses hexanoyl-CoA + O2 = (2E)-hexenoyl-CoA + H2O2. It carries out the reaction octadecanoyl-CoA + O2 = (2E)-octadecenoyl-CoA + H2O2. The catalysed reaction is (5Z,8Z,11Z,14Z,17Z)-eicosapentaenoyl-CoA + O2 = (2E,5Z,8Z,11Z,14Z,17Z)-icosahexaenoyl-CoA + H2O2. It catalyses the reaction (6Z,9Z,12Z,15Z,18Z,21Z)-tetracosahexaenoyl-CoA + O2 = (2E,6Z,9Z,12Z,15Z,18Z,21Z)-tetracosaheptaenoyl-CoA + H2O2. It functions in the pathway lipid metabolism; peroxisomal fatty acid beta-oxidation. Its function is as follows. Involved in the initial and rate-limiting step of peroxisomal beta-oxidation of straight-chain saturated and unsaturated very-long-chain fatty acids. Catalyzes the desaturation of fatty acyl-CoAs such as palmitoyl-CoA (hexadecanoyl-CoA) to 2-trans-enoyl-CoAs ((2E)-enoyl-CoAs) such as (2E)-hexadecenoyl-CoA, and donates electrons directly to molecular oxygen (O(2)), thereby producing hydrogen peroxide (H(2)O(2)). The protein is Peroxisomal acyl-coenzyme A oxidase 1 of Cavia porcellus (Guinea pig).